Reading from the N-terminus, the 274-residue chain is NH(3)-dependent NAD(+) synthetase (274 aa).

G46–S53 is an ATP binding site. D52 is a Mg(2+) binding site. R140 provides a ligand contact to deamido-NAD(+). Residue T160 participates in ATP binding. E165 is a Mg(2+) binding site. 2 residues coordinate deamido-NAD(+): K173 and D180. The ATP site is built by K189 and T211. Residue H260–K261 coordinates deamido-NAD(+).

Belongs to the NAD synthetase family. As to quaternary structure, homodimer.

The enzyme catalyses deamido-NAD(+) + NH4(+) + ATP = AMP + diphosphate + NAD(+) + H(+). The protein operates within cofactor biosynthesis; NAD(+) biosynthesis; NAD(+) from deamido-NAD(+) (ammonia route): step 1/1. Functionally, catalyzes the ATP-dependent amidation of deamido-NAD to form NAD. Uses ammonia as a nitrogen source. The polypeptide is NH(3)-dependent NAD(+) synthetase (Streptococcus pyogenes serotype M3 (strain ATCC BAA-595 / MGAS315)).